Consider the following 1906-residue polypeptide: Alpha-2-macroglobulin homolog (1906 aa).

Residues 1–21 (MIIRVCIRCFIVLTLVLGIGG) form the signal peptide. Cysteine 22 carries the N-palmitoyl cysteine lipid modification. Cysteine 22 carries the S-diacylglycerol cysteine lipid modification.

This sequence belongs to the protease inhibitor I39 (alpha-2-macroglobulin) family. Bacterial alpha-2-macroglobulin subfamily.

It is found in the cell membrane. The protein is Alpha-2-macroglobulin homolog of Nostoc sp. (strain PCC 7120 / SAG 25.82 / UTEX 2576).